The following is a 278-amino-acid chain: Lipoyl-[GcvH]:protein N-lipoyltransferase (278 aa).

The BPL/LPL catalytic domain maps to 44–250; that stretch reads RMAPSTVRGW…SLRHYAGDLV (207 aa). C149 serves as the catalytic Acyl-thioester intermediate.

It belongs to the octanoyltransferase LipL family.

The enzyme catalyses N(6)-[(R)-lipoyl]-L-lysyl-[glycine-cleavage complex H protein] + L-lysyl-[lipoyl-carrier protein] = L-lysyl-[glycine-cleavage complex H protein] + N(6)-[(R)-lipoyl]-L-lysyl-[lipoyl-carrier protein]. It participates in protein modification; protein lipoylation via exogenous pathway. Functionally, catalyzes the amidotransfer (transamidation) of the lipoyl moiety from lipoyl-GcvH to the lipoyl domain of the E2 subunit of lipoate-dependent enzymes. Takes part in a pathway for scavenging of lipoic acid derived from eukaryotic host cells. Cannot use lipoyl-tripeptide (DK(L)A), lipoamide (LD), or free lipoate as substrate. In Listeria monocytogenes serovar 1/2a (strain ATCC BAA-679 / EGD-e), this protein is Lipoyl-[GcvH]:protein N-lipoyltransferase.